We begin with the raw amino-acid sequence, 426 residues long: Histidinol dehydrogenase (426 aa).

NAD(+) is bound by residues Y130, Q187, and N210. Residues S233, Q255, and H258 each contribute to the substrate site. Zn(2+)-binding residues include Q255 and H258. Residues E323 and H324 each act as proton acceptor in the active site. Substrate-binding residues include H324, D357, E411, and H416. D357 contributes to the Zn(2+) binding site. H416 provides a ligand contact to Zn(2+).

Belongs to the histidinol dehydrogenase family. Zn(2+) is required as a cofactor.

It catalyses the reaction L-histidinol + 2 NAD(+) + H2O = L-histidine + 2 NADH + 3 H(+). The protein operates within amino-acid biosynthesis; L-histidine biosynthesis; L-histidine from 5-phospho-alpha-D-ribose 1-diphosphate: step 9/9. Functionally, catalyzes the sequential NAD-dependent oxidations of L-histidinol to L-histidinaldehyde and then to L-histidine. The protein is Histidinol dehydrogenase (hisD) of Aquifex aeolicus (strain VF5).